A 319-amino-acid chain; its full sequence is Acetyl-coenzyme A carboxylase carboxyl transferase subunit alpha (319 aa).

One can recognise a CoA carboxyltransferase C-terminal domain in the interval 35-296 (NIDEEVHRLR…KAQLLADLAD (262 aa)).

This sequence belongs to the AccA family. In terms of assembly, acetyl-CoA carboxylase is a heterohexamer composed of biotin carboxyl carrier protein (AccB), biotin carboxylase (AccC) and two subunits each of ACCase subunit alpha (AccA) and ACCase subunit beta (AccD).

The protein localises to the cytoplasm. It catalyses the reaction N(6)-carboxybiotinyl-L-lysyl-[protein] + acetyl-CoA = N(6)-biotinyl-L-lysyl-[protein] + malonyl-CoA. It functions in the pathway lipid metabolism; malonyl-CoA biosynthesis; malonyl-CoA from acetyl-CoA: step 1/1. In terms of biological role, component of the acetyl coenzyme A carboxylase (ACC) complex. First, biotin carboxylase catalyzes the carboxylation of biotin on its carrier protein (BCCP) and then the CO(2) group is transferred by the carboxyltransferase to acetyl-CoA to form malonyl-CoA. This Klebsiella pneumoniae (strain 342) protein is Acetyl-coenzyme A carboxylase carboxyl transferase subunit alpha.